A 339-amino-acid chain; its full sequence is MKFDQKGLKKQSMTVAYFFDNINNDLDIKLRRLNEVDEQKRRITDRDLHRPGLALAGFTNLFTYKRVQILGNTEMRFLNHLDDKTRKMAFENIVKYKVPCIIITSNNKLDPALLDMATEAGIPAFITRNSSTRTIFLITDFLVDRFSVYQQYHGSMVDVYGVGVMLVGKSGLGKSEVALDLVERGHRLVADDAVVINRKGEKTLIASGNHVIGHFMEIRGLGVVDVKAAFGIRAIREKKVVQVVVELMEWNEDMDYERLGLDTKTTKILGVEVPLIQLPINPGKNITVIIEVVALNYLLKQYSGYVAAEALEERIKTSIDDEAMMTTRFGSNYLTKDYE.

Residues His153 and Lys174 contribute to the active site. Position 168–175 (168–175) interacts with ATP; sequence GKSGLGKS. Ser175 lines the Mg(2+) pocket. The Proton acceptor; for phosphorylation activity. Proton donor; for dephosphorylation activity role is filled by Asp192. The interval 216–225 is important for the catalytic mechanism of both phosphorylation and dephosphorylation; that stretch reads MEIRGLGVVD. Glu217 provides a ligand contact to Mg(2+). Residue Arg258 is part of the active site. The tract at residues 279–284 is important for the catalytic mechanism of dephosphorylation; it reads PINPGK.

It belongs to the HPrK/P family. In terms of assembly, homohexamer. The cofactor is Mg(2+).

It carries out the reaction [HPr protein]-L-serine + ATP = [HPr protein]-O-phospho-L-serine + ADP + H(+). It catalyses the reaction [HPr protein]-O-phospho-L-serine + phosphate + H(+) = [HPr protein]-L-serine + diphosphate. Its function is as follows. Catalyzes the ATP- as well as the pyrophosphate-dependent phosphorylation of a specific serine residue in HPr, a phosphocarrier protein of the phosphoenolpyruvate-dependent sugar phosphotransferase system (PTS). HprK/P also catalyzes the pyrophosphate-producing, inorganic phosphate-dependent dephosphorylation (phosphorolysis) of seryl-phosphorylated HPr (P-Ser-HPr). This Chlorobium phaeobacteroides (strain BS1) protein is HPr kinase/phosphorylase.